Here is a 968-residue protein sequence, read N- to C-terminus: RNA polymerase-associated protein RapA (968 aa).

A Helicase ATP-binding domain is found at 163–332 (EVGRRYAPRV…FARLRLLDPD (170 aa)). 176–183 (DEVGLGKT) serves as a coordination point for ATP. The DEAH box signature appears at 278 to 281 (DEAH). The region spanning 491–655 (RVDWLIEFLK…EFAEDLLNVL (165 aa)) is the Helicase C-terminal domain.

Belongs to the SNF2/RAD54 helicase family. RapA subfamily. As to quaternary structure, interacts with the RNAP. Has a higher affinity for the core RNAP than for the holoenzyme. Its ATPase activity is stimulated by binding to RNAP.

Transcription regulator that activates transcription by stimulating RNA polymerase (RNAP) recycling in case of stress conditions such as supercoiled DNA or high salt concentrations. Probably acts by releasing the RNAP, when it is trapped or immobilized on tightly supercoiled DNA. Does not activate transcription on linear DNA. Probably not involved in DNA repair. This is RNA polymerase-associated protein RapA from Shewanella baltica (strain OS223).